The following is a 500-amino-acid chain: L-arabinose isomerase (500 aa).

Mn(2+) is bound by residues Glu-306, Glu-333, His-350, and His-450.

This sequence belongs to the arabinose isomerase family. In terms of assembly, homohexamer. Mn(2+) is required as a cofactor.

It catalyses the reaction beta-L-arabinopyranose = L-ribulose. The protein operates within carbohydrate degradation; L-arabinose degradation via L-ribulose; D-xylulose 5-phosphate from L-arabinose (bacterial route): step 1/3. Its function is as follows. Catalyzes the conversion of L-arabinose to L-ribulose. This Klebsiella pneumoniae subsp. pneumoniae (strain ATCC 700721 / MGH 78578) protein is L-arabinose isomerase.